Reading from the N-terminus, the 353-residue chain is RNA 3'-terminal phosphate cyclase (353 aa).

ATP contacts are provided by residues Gln103 and 297 to 301 (HLADQ). Residue His322 is the Tele-AMP-histidine intermediate of the active site.

The protein belongs to the RNA 3'-terminal cyclase family. Type 1 subfamily.

The protein resides in the cytoplasm. It carries out the reaction a 3'-end 3'-phospho-ribonucleotide-RNA + ATP = a 3'-end 2',3'-cyclophospho-ribonucleotide-RNA + AMP + diphosphate. Catalyzes the conversion of 3'-phosphate to a 2',3'-cyclic phosphodiester at the end of RNA. The mechanism of action of the enzyme occurs in 3 steps: (A) adenylation of the enzyme by ATP; (B) transfer of adenylate to an RNA-N3'P to produce RNA-N3'PP5'A; (C) and attack of the adjacent 2'-hydroxyl on the 3'-phosphorus in the diester linkage to produce the cyclic end product. The biological role of this enzyme is unknown but it is likely to function in some aspects of cellular RNA processing. This Salmonella heidelberg (strain SL476) protein is RNA 3'-terminal phosphate cyclase.